Consider the following 337-residue polypeptide: MVVKVGINGFGRIGRIVFRNAIEHNDVEIVAVNDPFIEPHYAAYMLKYDSQHGQFKGDIKVEGNDLTINGKTIRFYTEKDPANIPWSETGAYYVVESTGVFTTTDKAKAHLKGGAKKVVISAPSADAPMFVMGVNNETYTKDIEVLSNASCTTNCLAPLAKVIHDKFTIIEGLMTTVHSYTATQKVVDGPSAKDWRGGRTAAQNIIPSSTGAAKAVGKVIPDLNGKLTGMSMRVPTSNVSVVDLTVRLEKGATYDEIKEAVKAAADGPLNGILGYTEDEIVSTDLNGDTRSSIFDAKAGISLNKNFVKLVSWYDNEWGYSRRVLDLLVYIAKVDGNA.

Residues 12–13, aspartate 34, and lysine 79 each bind NAD(+); that span reads RI. D-glyceraldehyde 3-phosphate-binding positions include 150-152, threonine 181, 210-211, and arginine 233; these read SCT and TG. The Nucleophile role is filled by cysteine 151. Asparagine 315 is a binding site for NAD(+).

The protein belongs to the glyceraldehyde-3-phosphate dehydrogenase family. In terms of assembly, homotetramer.

The protein resides in the cytoplasm. It catalyses the reaction D-glyceraldehyde 3-phosphate + phosphate + NAD(+) = (2R)-3-phospho-glyceroyl phosphate + NADH + H(+). It participates in carbohydrate degradation; glycolysis; pyruvate from D-glyceraldehyde 3-phosphate: step 1/5. This is Glyceraldehyde-3-phosphate dehydrogenase (GPD1) from Phaeosphaeria nodorum (strain SN15 / ATCC MYA-4574 / FGSC 10173) (Glume blotch fungus).